Consider the following 601-residue polypeptide: Regulatory protein BlaR1 (601 aa).

Residues 1–8 (MSSSFFIP) lie on the Extracellular side of the membrane. A helical membrane pass occupies residues 9–26 (FLVSQILLSLFFSIIILI). Topologically, residues 27–35 (KKLLRTQIT) are cytoplasmic. Residues 36 to 52 (VGTHYYISVISLLALIA) form a helical membrane-spanning segment. The Extracellular portion of the chain corresponds to 53–115 (PFIPFHFLKS…EQSSSKMIDS (63 aa)). Residues 116–133 (AFFAVWILGVAVMLLATL) traverse the membrane as a helical segment. Over 134–322 (YSNLKIGKIK…QTASPLLKAK (189 aa)) the chain is Cytoplasmic. The chain crosses the membrane as a helical span at residues 323–339 (SALVFTLVLGAILAGTP). Residues 340 to 601 (SVSILAMQKE…KKGIYPSVSR (262 aa)) lie on the Extracellular side of the membrane. The beta-lactam antibiotic sensor domain stretch occupies residues 354-601 (PGTNVEYEDY…KKGIYPSVSR (248 aa)). The Acyl-ester intermediate role is filled by Ser-402. At Lys-405 the chain carries N6-carboxylysine.

Belongs to the peptidase M56 family. In terms of processing, carboxylation occurs on two lysine residues. Carboxylation at 'Lys-405' activates the active site serine residue for acylation. On acylation, the lysine side chain experiences a spontaneous decarboxylation that entraps the sensor in its activated state.

Its subcellular location is the cell membrane. In terms of biological role, integral membrane protein involved in sensing of the presence of beta-lactam antibiotics and transduction of the information to the cytoplasm. Mechanistically, activation of the signal transducer involves acylation of a serine in the C-terminal sensor domain upon binding of the beta-lactam antibiotic. In turn, a conformational change occurs and the signal is transmitted from the cell surface to the cytoplasm. There, the zinc protease domain is activated and initiates autoproteolysis as well as cleavage of the transcriptional repressor BlaI leading to derepression of antibiotic resistance genes. The polypeptide is Regulatory protein BlaR1 (blaR1) (Bacillus licheniformis).